A 458-amino-acid polypeptide reads, in one-letter code: Argininosuccinate lyase (458 aa).

It belongs to the lyase 1 family. Argininosuccinate lyase subfamily.

Its subcellular location is the cytoplasm. The enzyme catalyses 2-(N(omega)-L-arginino)succinate = fumarate + L-arginine. It functions in the pathway amino-acid biosynthesis; L-arginine biosynthesis; L-arginine from L-ornithine and carbamoyl phosphate: step 3/3. This chain is Argininosuccinate lyase, found in Salmonella typhimurium (strain LT2 / SGSC1412 / ATCC 700720).